The sequence spans 373 residues: Peptide chain release factor 2 (373 aa).

Gln251 bears the N5-methylglutamine mark.

It belongs to the prokaryotic/mitochondrial release factor family. Post-translationally, methylated by PrmC. Methylation increases the termination efficiency of RF2.

It is found in the cytoplasm. In terms of biological role, peptide chain release factor 2 directs the termination of translation in response to the peptide chain termination codons UGA and UAA. The chain is Peptide chain release factor 2 from Salinispora arenicola (strain CNS-205).